The sequence spans 149 residues: Transcription antitermination protein NusB (149 aa).

The protein belongs to the NusB family.

Involved in transcription antitermination. Required for transcription of ribosomal RNA (rRNA) genes. Binds specifically to the boxA antiterminator sequence of the ribosomal RNA (rrn) operons. In Acinetobacter baylyi (strain ATCC 33305 / BD413 / ADP1), this protein is Transcription antitermination protein NusB.